Here is a 519-residue protein sequence, read N- to C-terminus: Maturase K (519 aa).

The protein belongs to the intron maturase 2 family. MatK subfamily.

It is found in the plastid. The protein localises to the chloroplast. Functionally, usually encoded in the trnK tRNA gene intron. Probably assists in splicing its own and other chloroplast group II introns. This chain is Maturase K, found in Aesculus pavia (Red buckeye).